A 381-amino-acid chain; its full sequence is Creatine kinase M-type (381 aa).

Residues 11 to 98 (KLNFKAEEEY…FDPIIQDRHG (88 aa)) form the Phosphagen kinase N-terminal domain. Residues 125–367 (YVLSSRVRTG…KLMVEMEKKL (243 aa)) form the Phosphagen kinase C-terminal domain. Residue 128–132 (SSRVR) participates in ATP binding. Serine 164 is subject to Phosphoserine. Threonine 166 is subject to Phosphothreonine. Serine 178 bears the Phosphoserine mark. Threonine 180 bears the Phosphothreonine mark. Histidine 191 is a binding site for ATP. Serine 199 bears the Phosphoserine mark. The ATP site is built by arginine 236 and arginine 292. Phosphothreonine is present on residues threonine 313 and threonine 322. Residues 320 to 325 (RGTGGV) and aspartate 335 contribute to the ATP site. Position 372 is a phosphoserine (serine 372).

This sequence belongs to the ATP:guanido phosphotransferase family. Dimer of identical or non-identical chains, which can be either B (brain type) or M (muscle type). With MM being the major form in skeletal muscle and myocardium, MB existing in myocardium, and BB existing in many tissues, especially brain.

It localises to the cytoplasm. It catalyses the reaction creatine + ATP = N-phosphocreatine + ADP + H(+). Functionally, reversibly catalyzes the transfer of phosphate between ATP and various phosphogens (e.g. creatine phosphate). Creatine kinase isoenzymes play a central role in energy transduction in tissues with large, fluctuating energy demands, such as skeletal muscle, heart, brain and spermatozoa. The sequence is that of Creatine kinase M-type (CKM) from Bos taurus (Bovine).